A 432-amino-acid chain; its full sequence is Glutamate-1-semialdehyde 2,1-aminomutase (432 aa).

Lys-266 carries the post-translational modification N6-(pyridoxal phosphate)lysine.

It belongs to the class-III pyridoxal-phosphate-dependent aminotransferase family. HemL subfamily. In terms of assembly, homodimer. Pyridoxal 5'-phosphate is required as a cofactor.

Its subcellular location is the cytoplasm. It carries out the reaction (S)-4-amino-5-oxopentanoate = 5-aminolevulinate. It participates in porphyrin-containing compound metabolism; protoporphyrin-IX biosynthesis; 5-aminolevulinate from L-glutamyl-tRNA(Glu): step 2/2. The sequence is that of Glutamate-1-semialdehyde 2,1-aminomutase from Janthinobacterium sp. (strain Marseille) (Minibacterium massiliensis).